The sequence spans 496 residues: MSLYEYNDPIINKDLAQADPVMGQNRTFPTLEAWYDVINDYEFQSRCPIILKNSHKTKHFTFACHLKSCPFKILLSHQGPVSVQNGDGSPGVGVGDEHGHHHHHNMHAHHHHHHQNGHTNGHGNSGDDVSEQEAQQDDEDDDAAVTAAIAAAVAAVADSQETIKGPFAVTKIEPYHNHPLESNLSLQRFVLTKIPKILQVDLKFDAILESLCNDEDNTVAKFRVAQYVEESGIIDIIKQRYGLTDAEMDKKMLSNIARRVTTDKARFVLKRKKEGVYMLPNGHQISGADQHQHQLQHQHQHQHQHQHQHQHQHQSQDQHQNQHQQHVGNDNHVYQDRIHSQSDQDEAGVHNLDDNNVRVAAAAAAAAAAALQSRDSHVSEELKLNCGTGQDEDGIEDDNHSSKRQLHRSDRDRVAEALKMATRDILSNQNVDSDVNVDVDLVTGHKQLSPHDDMAEQLRLLSSHLKEVEAEENVSDSNLKKDDVQDENIQPELRGQ.

Disordered stretches follow at residues 82–143, 280–326, 386–412, and 469–496; these read SVQN…DDDA, PNGH…HQQH, CGTGQDEDGIEDDNHSSKRQLHRSDRD, and EAEENVSDSNLKKDDVQDENIQPELRGQ. A compositionally biased stretch (basic residues) spans 100-116; that stretch reads HHHHHNMHAHHHHHHQN. The span at 128–143 shows a compositional bias: acidic residues; that stretch reads DVSEQEAQQDDEDDDA. Over residues 294 to 312 the composition is skewed to basic residues; it reads QLQHQHQHQHQHQHQHQHQ. Positions 313–326 are enriched in low complexity; it reads HQSQDQHQNQHQQH. A compositionally biased stretch (basic and acidic residues) spans 397-412; that stretch reads DDNHSSKRQLHRSDRD. Ser-402 is modified (phosphoserine; by PKC).

It belongs to the ABF1 family. Post-translationally, extensively phosphorylated on Ser and Thr residues.

Its subcellular location is the nucleus. Its function is as follows. General regulatory factor (GRF) that contributes to transcriptional activation of a large number of genes, as well as to DNA replication, silencing and telomere structure. Involved in the transcription activation of a subset of ribosomal protein genes. Binds the ARS-elements found in many promoters. Binds to the sequence 5'-TCN(7)ACG-3'. The chain is ARS-binding factor 1 (ABF1) from Kluyveromyces marxianus (Yeast).